We begin with the raw amino-acid sequence, 299 residues long: Oxygen-dependent coproporphyrinogen-III oxidase (299 aa).

Serine 92 lines the substrate pocket. Histidine 96 and histidine 106 together coordinate a divalent metal cation. Residue histidine 106 is the Proton donor of the active site. 108–110 (NVR) lines the substrate pocket. A divalent metal cation contacts are provided by histidine 145 and histidine 175. Residues 240–275 (YVEFNLVWDRGTLFGLQTGGRTESILMSMPPLVRWE) are important for dimerization. 258-260 (GGR) is a substrate binding site.

The protein belongs to the aerobic coproporphyrinogen-III oxidase family. In terms of assembly, homodimer. Requires a divalent metal cation as cofactor.

It localises to the cytoplasm. The enzyme catalyses coproporphyrinogen III + O2 + 2 H(+) = protoporphyrinogen IX + 2 CO2 + 2 H2O. Its pathway is porphyrin-containing compound metabolism; protoporphyrin-IX biosynthesis; protoporphyrinogen-IX from coproporphyrinogen-III (O2 route): step 1/1. In terms of biological role, involved in the heme biosynthesis. Catalyzes the aerobic oxidative decarboxylation of propionate groups of rings A and B of coproporphyrinogen-III to yield the vinyl groups in protoporphyrinogen-IX. This Shigella dysenteriae serotype 1 (strain Sd197) protein is Oxygen-dependent coproporphyrinogen-III oxidase.